The sequence spans 195 residues: Nucleoside triphosphate pyrophosphatase (195 aa).

Aspartate 70 acts as the Proton acceptor in catalysis.

Belongs to the Maf family. It depends on a divalent metal cation as a cofactor.

Its subcellular location is the cytoplasm. The enzyme catalyses a ribonucleoside 5'-triphosphate + H2O = a ribonucleoside 5'-phosphate + diphosphate + H(+). It catalyses the reaction a 2'-deoxyribonucleoside 5'-triphosphate + H2O = a 2'-deoxyribonucleoside 5'-phosphate + diphosphate + H(+). Functionally, nucleoside triphosphate pyrophosphatase. May have a dual role in cell division arrest and in preventing the incorporation of modified nucleotides into cellular nucleic acids. This chain is Nucleoside triphosphate pyrophosphatase, found in Cyanothece sp. (strain PCC 7425 / ATCC 29141).